A 612-amino-acid polypeptide reads, in one-letter code: Proton channel OTOP1 (612 aa).

A compositionally biased stretch (low complexity) spans 1–46 (MLEGLGSPASPRAAASASVAGSSGPAACSPPSSSAPRSPESPAPRR). The disordered stretch occupies residues 1–50 (MLEGLGSPASPRAAASASVAGSSGPAACSPPSSSAPRSPESPAPRRGGVR). At 1-58 (MLEGLGSPASPRAAASASVAGSSGPAACSPPSSSAPRSPESPAPRRGGVRASVPQKLA) the chain is on the cytoplasmic side. Residues 59-80 (EMLSSQYGLIVFVAGLLLLLAW) form a helical membrane-spanning segment. Residues 81–88 (AVHAAGVS) lie on the Extracellular side of the membrane. A helical membrane pass occupies residues 89-112 (KSDLLCFLTALMLLQLLWMLWYVG). The Cytoplasmic portion of the chain corresponds to 113–130 (RSSAHRRLFRLKDTHAGA). A helical transmembrane segment spans residues 131 to 153 (GWLRGSITLFAVITVILGCLKIG). Topologically, residues 154–163 (YFIGFSECLS) are extracellular. Residues 164–188 (ATEGVFPVTHSVHTLLQVYFLWGHA) form a helical membrane-spanning segment. Residues 189 to 196 (KDIIQSFK) are Cytoplasmic-facing. The helical transmembrane segment at 197–223 (TLERFGVIHSVFTNLLLWANGVLNESK) threads the bilayer. Topologically, residues 224–264 (HQLNEHKERLITLGFGNITTVLDDHTPQCNCTPPTLCTAIS) are extracellular. A helical transmembrane segment spans residues 265-290 (HGIYYLYPFNIEYQILASTMLYVLWK). The Cytoplasmic segment spans residues 291–311 (NIGRKVDSHQHQKMQFKSDGV). Residues 312 to 334 (MVGAVLGLTVLAATIAVVVVYLI) traverse the membrane as a helical segment. Topologically, residues 335–344 (HIGRSKTKSE) are extracellular. Residues 345 to 370 (SALIMFYLYAITLLMLMGAAGLAGIR) traverse the membrane as a helical segment. Residues 371–388 (IYRIDEKSLDESKNPARK) lie on the Cytoplasmic side of the membrane. The chain crosses the membrane as a helical span at residues 389–413 (LDSDLLVGTASGSWLISWGSILAIL). The Extracellular portion of the chain corresponds to 414–423 (CAEGHPRYTW). Residues 424 to 444 (YNLPYSILAIVEKYIQNLFIF) traverse the membrane as a helical segment. The Cytoplasmic segment spans residues 445–544 (ESIHREPEKL…QGNAKRKVLR (100 aa)). The segment at 499 to 525 (ANGNVCMRESHDKEEEKQEESSWGGSP) is disordered. Over residues 506–518 (RESHDKEEEKQEE) the composition is skewed to basic and acidic residues. A helical transmembrane segment spans residues 545-563 (NIAAFLFLCNISLWIPPAF). Residues 564-581 (GCRPEYDNGLEEIVFGFE) are Extracellular-facing. A helical transmembrane segment spans residues 582 to 605 (PWIIVVNLAMPFSIFYRMHAAASL). Residues 606–612 (FEVYCKI) are Cytoplasmic-facing.

It belongs to the otopetrin family. As to quaternary structure, homodimer. Interacts with STAT1, independently of STAT1 phosphorylation status.

The protein localises to the cell membrane. Its subcellular location is the cell projection. The protein resides in the microvillus. It carries out the reaction H(+)(in) = H(+)(out). With respect to regulation, activated by both acid and alkali, with proton influx in response to extracellular acid and proton efflux during alkali stimulation. Inhibited by Zn(2+); this inhibition is thought to be pH-sensitive. Currents evoked in response to mild acid (pH 6.0) stimulus may also be mildly potentiated by exposure to Zn(2+). Activated by NH(4)Cl. In terms of biological role, proton-selective ion channel. Biphasically modulated by acid and alkali, mediating proton influx and efflux in response to extracellular acid and base stimulation, respectively. Sour taste receptor, which carries inward currents in response to extracellular acidification. Sensor for ammonium chloride (NH(4)Cl) in taste receptor cells. NH(4)Cl acts by increasing the intracellular pH, thereby generating a driving force for proton entry through OTOP1 channel. Might also participate in alkaline sensation. Plays a role in the regulation of Ca(2+) flux in response to purigenic (ATP, ADP and UDP) stimuli, leading to increase in cytosolic Ca(2+) due to influx of extracellular calcium. May play this role by inhibiting P2Y purinoceptor-mediated Ca(2+) release in a Ca(2+)-dependent manner and promote an influx of Ca(2+) in response to ATP. Through this mechanism and possibly others, plays a role in the formation and function of calcium carbonate-based structures in the vestibular system of the inner ear, called otoconia, that sense gravity and linear acceleration. In obesity, may attenuate adipose tissue inflammation, through the negative regulation of IFNG signaling, hence may play an adaptive role in the maintainance of metabolic homeostasis. Following alkali activation, may also be permeable Na(+), K(+), Cs(+) and Li(+). This is Proton channel OTOP1 from Homo sapiens (Human).